A 332-amino-acid polypeptide reads, in one-letter code: Holliday junction branch migration complex subunit RuvB (332 aa).

Residues Met1 to Tyr181 form a large ATPase domain (RuvB-L) region. ATP-binding positions include Leu20, Arg21, Gly62, Lys65, Thr66, Thr67, Glu128 to Phe130, Arg171, Tyr181, and Arg218. Thr66 lines the Mg(2+) pocket. A small ATPAse domain (RuvB-S) region spans residues Gln182 to Asp252. A head domain (RuvB-H) region spans residues Arg255 to Thr332. Residues Arg291, Arg310, Arg312, and Arg315 each coordinate DNA.

Belongs to the RuvB family. In terms of assembly, homohexamer. Forms an RuvA(8)-RuvB(12)-Holliday junction (HJ) complex. HJ DNA is sandwiched between 2 RuvA tetramers; dsDNA enters through RuvA and exits via RuvB. An RuvB hexamer assembles on each DNA strand where it exits the tetramer. Each RuvB hexamer is contacted by two RuvA subunits (via domain III) on 2 adjacent RuvB subunits; this complex drives branch migration. In the full resolvosome a probable DNA-RuvA(4)-RuvB(12)-RuvC(2) complex forms which resolves the HJ.

The protein resides in the cytoplasm. The enzyme catalyses ATP + H2O = ADP + phosphate + H(+). Functionally, the RuvA-RuvB-RuvC complex processes Holliday junction (HJ) DNA during genetic recombination and DNA repair, while the RuvA-RuvB complex plays an important role in the rescue of blocked DNA replication forks via replication fork reversal (RFR). RuvA specifically binds to HJ cruciform DNA, conferring on it an open structure. The RuvB hexamer acts as an ATP-dependent pump, pulling dsDNA into and through the RuvAB complex. RuvB forms 2 homohexamers on either side of HJ DNA bound by 1 or 2 RuvA tetramers; 4 subunits per hexamer contact DNA at a time. Coordinated motions by a converter formed by DNA-disengaged RuvB subunits stimulates ATP hydrolysis and nucleotide exchange. Immobilization of the converter enables RuvB to convert the ATP-contained energy into a lever motion, pulling 2 nucleotides of DNA out of the RuvA tetramer per ATP hydrolyzed, thus driving DNA branch migration. The RuvB motors rotate together with the DNA substrate, which together with the progressing nucleotide cycle form the mechanistic basis for DNA recombination by continuous HJ branch migration. Branch migration allows RuvC to scan DNA until it finds its consensus sequence, where it cleaves and resolves cruciform DNA. The protein is Holliday junction branch migration complex subunit RuvB of Streptococcus pyogenes serotype M3 (strain ATCC BAA-595 / MGAS315).